Here is a 510-residue protein sequence, read N- to C-terminus: MKEHLVIFDTTLRDGEQSPGASMTMEEKVRIARQLERMGVDVIEAGFPAASRGDFEAVRAVAEAVSNSTVCGLARAMEADIDRTGEALQVNQNVRIHTFIATSPIHMKNKLRMSPDQVIDQAIKAVKWARQYTDNVEFSPEDAGRSEIDFLCRVLEAVIDAGARTLNIPDTVGYTMPDQFGGLIRTLRERIPNSDKAIFSVHCHNDLGLAVANSLSAVMNGARQVECTINGLGERAGNAALEEIVMAVRTRQDYFPCDTRIDTTQIVPASKLVSGITGFPVQPNKAIVGANAFAHESGIHQDGVLKHRETYEIMRAEDVGWGANKLLLGKHSGRNAFRSRLKELGIGLESEEKLNAIFLRFKDLADKKHEIFDEDLHALVSDEAQIPEEHYRLLSLHAVSETGEIPSAQVVIAVGGSEKQAVSEGSGPVDATFRAIEKILDSKVELQLFSVNNITSGTDAQGEVTVRLQKAGRIVNGHGADTDIIAASAKAYLSACNKLHSSLERTHPQI.

Positions 5–267 (LVIFDTTLRD…DTRIDTTQIV (263 aa)) constitute a Pyruvate carboxyltransferase domain. Residues Asp14, His202, His204, and Asn238 each coordinate Mn(2+). Residues 392–510 (RLLSLHAVSE…SSLERTHPQI (119 aa)) form a regulatory domain region.

The protein belongs to the alpha-IPM synthase/homocitrate synthase family. LeuA type 1 subfamily. As to quaternary structure, homodimer. Mn(2+) serves as cofactor.

The protein localises to the cytoplasm. The enzyme catalyses 3-methyl-2-oxobutanoate + acetyl-CoA + H2O = (2S)-2-isopropylmalate + CoA + H(+). It participates in amino-acid biosynthesis; L-leucine biosynthesis; L-leucine from 3-methyl-2-oxobutanoate: step 1/4. Catalyzes the condensation of the acetyl group of acetyl-CoA with 3-methyl-2-oxobutanoate (2-ketoisovalerate) to form 3-carboxy-3-hydroxy-4-methylpentanoate (2-isopropylmalate). The sequence is that of 2-isopropylmalate synthase from Nitrosomonas europaea (strain ATCC 19718 / CIP 103999 / KCTC 2705 / NBRC 14298).